A 52-amino-acid chain; its full sequence is Venom peptide 4a (52 aa).

The first 23 residues, methionine 1–alanine 23, serve as a signal peptide directing secretion. 3 AXPX repeats span residues alanine 23 to leucine 26, alanine 31 to asparagine 34, and alanine 39 to leucine 42. A propeptide spanning residues glutamate 24–proline 41 is cleaved from the precursor. Position 51 is an alanine amide (alanine 51).

Expressed by the venom gland.

Its subcellular location is the secreted. In Eumenes pomiformis (Potter wasp), this protein is Venom peptide 4a.